A 161-amino-acid polypeptide reads, in one-letter code: Large ribosomal subunit protein uL15 (161 aa).

Positions methionine 1–glycine 43 are disordered. A compositionally biased stretch (gly residues) spans arginine 21–glycine 37.

This sequence belongs to the universal ribosomal protein uL15 family. As to quaternary structure, part of the 50S ribosomal subunit.

In terms of biological role, binds to the 23S rRNA. The sequence is that of Large ribosomal subunit protein uL15 from Bradyrhizobium sp. (strain ORS 278).